Consider the following 627-residue polypeptide: Glucokinase regulatory protein (627 aa).

SIS domains lie at 90-286 (VQEV…QGVV) and 320-499 (VGIS…LLGK). Beta-D-fructose 1-phosphate is bound by residues 109-110 (TS), glutamate 153, and 179-181 (SVG). 109 to 110 (TS) serves as a coordination point for beta-D-fructose 6-phosphate. A beta-D-fructose 6-phosphate-binding site is contributed by 179 to 181 (SVG). The interval 199 to 200 (AV) is important for interaction with GCK. Glutamate 348 is a binding site for beta-D-fructose 1-phosphate. Residues 463–465 (LLF) form an essential for interaction with GCK region. Lysine 514 contacts beta-D-fructose 1-phosphate. Lysine 514 provides a ligand contact to beta-D-fructose 6-phosphate.

Belongs to the GCKR family. Interacts (fructose 6-phosphate bound form) with GCK. Detected in liver (at protein level). Not detected in muscle, brain, heart, testis, intestine or spleen.

The protein localises to the cytoplasm. It localises to the nucleus. The protein resides in the mitochondrion. Regulates glucokinase (GCK) by forming an inactive complex with this enzyme. Acts by promoting GCK recruitment to the nucleus, possibly to provide a reserve of GCK that can be quickly released in the cytoplasm after a meal. The affinity of GCKR for GCK is modulated by fructose metabolites: GCKR with bound fructose 6-phosphate has increased affinity for GCK, while GCKR with bound fructose 1-phosphate has strongly decreased affinity for GCK and does not inhibit GCK activity. The sequence is that of Glucokinase regulatory protein from Rattus norvegicus (Rat).